The chain runs to 60 residues: Large ribosomal subunit protein bL32 (60 aa).

A compositionally biased stretch (basic residues) spans 1 to 23 (MAKHPVPKKKTSKSKRDMRRSHH). Residues 1–34 (MAKHPVPKKKTSKSKRDMRRSHHALTAPNLTECP) are disordered. Residues C33, C36, C46, and C49 each contribute to the Zn(2+) site. Residues 33 to 49 (CPQCHGKKLSHHICPNC) form a C4-type zinc finger.

It belongs to the bacterial ribosomal protein bL32 family. As to quaternary structure, part of the 50S ribosomal subunit. Contacts proteins L17 and L22. It depends on Zn(2+) as a cofactor.

Its function is as follows. Forms a cluster with L17 and L22, and with L22, a pair of 'tweezers' that hold together all the domains of the 23S rRNA. Interacts with the antibiotic troleandomycin which blocks the peptide exit tunnel. This Deinococcus radiodurans (strain ATCC 13939 / DSM 20539 / JCM 16871 / CCUG 27074 / LMG 4051 / NBRC 15346 / NCIMB 9279 / VKM B-1422 / R1) protein is Large ribosomal subunit protein bL32 (rpmF).